Consider the following 123-residue polypeptide: UPF0102 protein DR_2282 (123 aa).

The protein belongs to the UPF0102 family.

The sequence is that of UPF0102 protein DR_2282 from Deinococcus radiodurans (strain ATCC 13939 / DSM 20539 / JCM 16871 / CCUG 27074 / LMG 4051 / NBRC 15346 / NCIMB 9279 / VKM B-1422 / R1).